The chain runs to 134 residues: Iron-sulfur cluster insertion protein ErpA (134 aa).

Positions 47, 126, and 128 each coordinate iron-sulfur cluster.

This sequence belongs to the HesB/IscA family. As to quaternary structure, homodimer. Requires iron-sulfur cluster as cofactor.

Functionally, required for insertion of 4Fe-4S clusters for at least IspG. This is Iron-sulfur cluster insertion protein ErpA from Coxiella burnetii (strain Dugway 5J108-111).